The following is a 319-amino-acid chain: Transcription initiation factor IIB 6 (319 aa).

Over residues 1 to 16 (MTDARMRSREQERTDE) the composition is skewed to basic and acidic residues. The tract at residues 1–33 (MTDARMRSREQERTDETESESTDGCPECGGLVV) is disordered. The TFIIB-type zinc finger occupies 21-51 (STDGCPECGGLVVNDEEHGESVCADCGLVVE). Zn(2+)-binding residues include cysteine 25, cysteine 28, cysteine 43, and cysteine 46. A compositionally biased stretch (basic and acidic residues) spans 59-74 (PEWRAFDSKEKDEKSR). Residues 59 to 89 (PEWRAFDSKEKDEKSRVGAPTTNTMHDKGLS) form a disordered region. Repeat copies occupy residues 137-220 (GEID…VREL) and 231-312 (SYVP…ELLE).

This sequence belongs to the TFIIB family.

Stabilizes TBP binding to an archaeal box-A promoter. Also responsible for recruiting RNA polymerase II to the pre-initiation complex (DNA-TBP-TFIIB). The polypeptide is Transcription initiation factor IIB 6 (Halobacterium salinarum (strain ATCC 700922 / JCM 11081 / NRC-1) (Halobacterium halobium)).